A 1269-amino-acid chain; its full sequence is Furin-like protease 1, isoforms 1/1-X/2 (1269 aa).

The interval 1-57 is disordered; sequence MKNDVVRWSRQPTSNTTNSSSSSRSDSNSTHKHRSKSNKLNARQLGSNAARSCQQRS. The span at 13-28 shows a compositional bias: low complexity; that stretch reads TSNTTNSSSSSRSDSN. Residues N15, N18, and N28 are each glycosylated (N-linked (GlcNAc...) asparagine). A compositionally biased stretch (polar residues) spans 38–57; sequence NKLNARQLGSNAARSCQQRS. A glycan (N-linked (GlcNAc...) asparagine) is linked at N108. A helical membrane pass occupies residues 119–139; that stretch reads VFLLALQFSAVVFLCNINVGF. The span at 150 to 163 shows a compositional bias: low complexity; the sequence is SAGGSSPAAPSSAP. The interval 150–187 is disordered; it reads SAGGSSPAAPSSAPSSPPTVAVPPPPPPSSALKVDPNG. The segment covering 164 to 178 has biased composition (pro residues); that stretch reads SSPPTVAVPPPPPPS. A glycan (N-linked (GlcNAc...) asparagine) is linked at N333. The Peptidase S8 domain occupies 340-654; it reads MWYLNRGGGL…YGLMDAAEMV (315 aa). Active-site charge relay system residues include D372 and H413. N426 is a glycosylation site (N-linked (GlcNAc...) asparagine). Cystine bridges form between C430/C579 and C522/C552. Catalysis depends on S587, which acts as the Charge relay system. An N-linked (GlcNAc...) asparagine glycan is attached at N606. A P/Homo B domain is found at 662–793; that stretch reads AVPEQQRCEI…SLIFYGTTQS (132 aa). Cysteines 669 and 695 form a disulfide. N-linked (GlcNAc...) asparagine glycans are attached at residues N727 and N814. Disordered stretches follow at residues 796–875, 891–1015, 1031–1050, and 1057–1083; these read PNDP…PPKQ, ANGK…NSRI, ELEP…AKQG, and LFKP…PSQT. Low complexity-rich tracts occupy residues 811-821 and 835-851; these read TTPNSSSTTSN and PNNF…LPLG. The N-linked (GlcNAc...) asparagine glycan is linked to N857. Over residues 858–868 the composition is skewed to polar residues; the sequence is KSSYVTNNPLL. N897 and N908 each carry an N-linked (GlcNAc...) asparagine glycan. Composition is skewed to low complexity over residues 905-915 and 929-940; these read NKGNKSNNGNK and TTQSTIIQTSTS. The span at 975 to 985 shows a compositional bias: basic and acidic residues; it reads KSYDEKSRKVV. Residue N994 is glycosylated (N-linked (GlcNAc...) asparagine). Residues 1005–1014 are compositionally biased toward polar residues; the sequence is ESTTTSSNSR. Polar residues predominate over residues 1062–1074; it reads NGGNSRQGNTKKS. A helical membrane pass occupies residues 1233-1253; sequence LGLSLLFFMIMQVFFLNFKHA.

The protein belongs to the peptidase S8 family. Furin subfamily. Ca(2+) is required as a cofactor. As to expression, in adults, isoform 1-X is expressed in CNS, fat body and female reproductive tissues, and in embryos, in CNS, tracheal pits, hindgut, posterior spiracles and anal pads.

It localises to the golgi apparatus membrane. It carries out the reaction Release of mature proteins from their proproteins by cleavage of -Arg-Xaa-Yaa-Arg-|-Zaa- bonds, where Xaa can be any amino acid and Yaa is Arg or Lys. Releases albumin, complement component C3 and von Willebrand factor from their respective precursors.. Furin is likely to represent the ubiquitous endoprotease activity within constitutive secretory pathways and capable of cleavage at the RX(K/R)R consensus motif. The protein is Furin-like protease 1, isoforms 1/1-X/2 (Fur1) of Drosophila melanogaster (Fruit fly).